The sequence spans 221 residues: UPF0758 protein ECA0145 (221 aa).

An MPN domain is found at 99–221 (AMLNPEATGQ…FVSFAERGWI (123 aa)). Residues H170, H172, and D183 each contribute to the Zn(2+) site. The short motif at 170–183 (HNHPSGKAEPSQAD) is the JAMM motif element.

Belongs to the UPF0758 family. YicR subfamily.

This chain is UPF0758 protein ECA0145, found in Pectobacterium atrosepticum (strain SCRI 1043 / ATCC BAA-672) (Erwinia carotovora subsp. atroseptica).